A 1273-amino-acid polypeptide reads, in one-letter code: DNA-directed RNA polymerase subunit beta (1273 aa).

It belongs to the RNA polymerase beta chain family. In terms of assembly, the RNAP catalytic core consists of 2 alpha, 1 beta, 1 beta' and 1 omega subunit. When a sigma factor is associated with the core the holoenzyme is formed, which can initiate transcription.

It catalyses the reaction RNA(n) + a ribonucleoside 5'-triphosphate = RNA(n+1) + diphosphate. Functionally, DNA-dependent RNA polymerase catalyzes the transcription of DNA into RNA using the four ribonucleoside triphosphates as substrates. The chain is DNA-directed RNA polymerase subunit beta from Onion yellows phytoplasma (strain OY-M).